The following is a 423-amino-acid chain: Histidine--tRNA ligase (423 aa).

Belongs to the class-II aminoacyl-tRNA synthetase family. Homodimer.

The protein localises to the cytoplasm. The catalysed reaction is tRNA(His) + L-histidine + ATP = L-histidyl-tRNA(His) + AMP + diphosphate + H(+). This is Histidine--tRNA ligase from Prochlorococcus marinus (strain NATL1A).